The chain runs to 394 residues: Elongation factor Tu (394 aa).

The tr-type G domain occupies 10 to 204; it reads KPHVNVGTIG…ALDSYIPEPE (195 aa). Residues 19–26 form a G1 region; sequence GHVDHGKT. Position 19 to 26 (19 to 26) interacts with GTP; the sequence is GHVDHGKT. Position 26 (T26) interacts with Mg(2+). The tract at residues 60-64 is G2; the sequence is GITIN. A G3 region spans residues 81-84; sequence DCPG. GTP contacts are provided by residues 81 to 85 and 136 to 139; these read DCPGH and NKCD. The G4 stretch occupies residues 136 to 139; sequence NKCD. A G5 region spans residues 174 to 176; it reads SAL.

The protein belongs to the TRAFAC class translation factor GTPase superfamily. Classic translation factor GTPase family. EF-Tu/EF-1A subfamily. In terms of assembly, monomer.

Its subcellular location is the cytoplasm. The enzyme catalyses GTP + H2O = GDP + phosphate + H(+). Functionally, GTP hydrolase that promotes the GTP-dependent binding of aminoacyl-tRNA to the A-site of ribosomes during protein biosynthesis. The sequence is that of Elongation factor Tu from Shewanella amazonensis (strain ATCC BAA-1098 / SB2B).